The sequence spans 449 residues: PGL/p-HBAD biosynthesis rhamnosyltransferase (449 aa).

This sequence belongs to the glycosyltransferase 28 family.

In terms of biological role, catalyzes the transfer of the first rhamnosyl residue on p-hydroxybenzoic acid or phenolphthiocerol derivatives to form, after O-methylation at position 2 of the sugar unit, mono-O-methyl-glycosyl-p-hydroxybenzoic acid derivative (p-HBAD I) and 2-O-methyl-rhamnosyl-phenolphthiocerol dimycocerosate (also called mycoside B) during p-hydroxybenzoic acid derivatives (p-HBAD) and glycosylated phenolphthiocerol dimycocerosates (PGL) biosynthesis. The chain is PGL/p-HBAD biosynthesis rhamnosyltransferase from Mycobacterium bovis (strain BCG / Pasteur 1173P2).